The primary structure comprises 208 residues: Uracil phosphoribosyltransferase (208 aa).

5-phospho-alpha-D-ribose 1-diphosphate-binding positions include Arg-78, Arg-103, and 130–138; that span reads DPMLATANS. Uracil is bound by residues Ile-193 and 198 to 200; that span reads GDA. Asp-199 contributes to the 5-phospho-alpha-D-ribose 1-diphosphate binding site.

Belongs to the UPRTase family. Requires Mg(2+) as cofactor.

The catalysed reaction is UMP + diphosphate = 5-phospho-alpha-D-ribose 1-diphosphate + uracil. It functions in the pathway pyrimidine metabolism; UMP biosynthesis via salvage pathway; UMP from uracil: step 1/1. With respect to regulation, allosterically activated by GTP. Its function is as follows. Catalyzes the conversion of uracil and 5-phospho-alpha-D-ribose 1-diphosphate (PRPP) to UMP and diphosphate. This chain is Uracil phosphoribosyltransferase, found in Brucella canis (strain ATCC 23365 / NCTC 10854 / RM-666).